The following is a 63-amino-acid chain: Large ribosomal subunit protein bL32 (63 aa).

A disordered region spans residues 1–20 (MANPKAKMSKSRRDKRRAQF). Residues 7–18 (KMSKSRRDKRRA) are compositionally biased toward basic residues.

This sequence belongs to the bacterial ribosomal protein bL32 family.

This Chlorobaculum parvum (strain DSM 263 / NCIMB 8327) (Chlorobium vibrioforme subsp. thiosulfatophilum) protein is Large ribosomal subunit protein bL32.